The primary structure comprises 445 residues: tRNA(Ile)-lysidine synthase (445 aa).

Position 30–35 (Ser30–Ser35) interacts with ATP.

Belongs to the tRNA(Ile)-lysidine synthase family.

Its subcellular location is the cytoplasm. It carries out the reaction cytidine(34) in tRNA(Ile2) + L-lysine + ATP = lysidine(34) in tRNA(Ile2) + AMP + diphosphate + H(+). Ligates lysine onto the cytidine present at position 34 of the AUA codon-specific tRNA(Ile) that contains the anticodon CAU, in an ATP-dependent manner. Cytidine is converted to lysidine, thus changing the amino acid specificity of the tRNA from methionine to isoleucine. The chain is tRNA(Ile)-lysidine synthase from Alkalilimnicola ehrlichii (strain ATCC BAA-1101 / DSM 17681 / MLHE-1).